We begin with the raw amino-acid sequence, 190 residues long: UPF0149 protein NT01EI_3357 (190 aa).

This sequence belongs to the UPF0149 family.

This chain is UPF0149 protein NT01EI_3357, found in Edwardsiella ictaluri (strain 93-146).